Here is a 464-residue protein sequence, read N- to C-terminus: NADH-ubiquinone oxidoreductase chain 4 (464 aa).

The next 13 helical transmembrane spans lie at 18–38, 54–74, 79–99, 102–122, 131–151, 168–188, 207–227, 239–259, 266–286, 297–317, 332–352, 375–395, and 420–440; these read LLPT…VLPT, IADI…IANW, SLLY…NFMC, MLSF…LIGL, AADY…LAIG, VVLS…GIMV, PLAG…YAII, VLYT…TSII, LKVI…LGIL, LILS…VGGI, GLLT…FSNI, TILG…MLKV, and LLMI…NGII.

Belongs to the complex I subunit 4 family.

The protein localises to the mitochondrion membrane. The enzyme catalyses a ubiquinone + NADH + 5 H(+)(in) = a ubiquinol + NAD(+) + 4 H(+)(out). Its function is as follows. Core subunit of the mitochondrial membrane respiratory chain NADH dehydrogenase (Complex I) that is believed to belong to the minimal assembly required for catalysis. Complex I functions in the transfer of electrons from NADH to the respiratory chain. The immediate electron acceptor for the enzyme is believed to be ubiquinone. This chain is NADH-ubiquinone oxidoreductase chain 4 (NAD4), found in Candida albicans (strain SC5314 / ATCC MYA-2876) (Yeast).